The sequence spans 198 residues: MTLRCLEPSGNGADRTRSQWGTAGSPEDQSPEAARLAKALRELSQTGWYWGSMTVNEAKEKLKEAPEGTFLIRDSSHSDYLLTISVKTSAGPTNLRIEYQDGKFRLDSIICVKSKLKQFDSVVHLIDYYVQMCKDKRTGPEAPRNGTVHLYLTKPLYTSAPTLQHFCRLSINKCTGTIRGLPLPTRLKDYLEEYKFQV.

The tract at residues 1 to 31 is disordered; that stretch reads MTLRCLEPSGNGADRTRSQWGTAGSPEDQSP. The interval 1–75 is interaction with AREL1; the sequence is MTLRCLEPSG…PEGTFLIRDS (75 aa). Phosphoserine occurs at positions 30 and 52. An SH2 domain is found at 48 to 156; it reads WYWGSMTVNE…TVHLYLTKPL (109 aa). Residues 151–197 form the SOCS box domain; that stretch reads YLTKPLYTSAPTLQHFCRLSINKCTGTIRGLPLPTRLKDYLEEYKFQ. K173 participates in a covalent cross-link: Glycyl lysine isopeptide (Lys-Gly) (interchain with G-Cter in ubiquitin).

Substrate-recognition component of the ECS(SOCS2) complex, composed of SOCS2, CUL5, ELOB, ELOC and RNF7/RBX2. Interacts with IGF1R. Interacts with DCUN1D1. Post-translationally, ubiquitinated; mediated by AREL1 and leading to its subsequent proteasomal degradation. Ubiquitination is dependent on its phosphorylation at Ser-52, by PKC. Ubiquitination is stimulated by LPS. Phosphorylation at Ser-52 by PKC facilitates its ubiquitination and proteasomal degradation.

The protein localises to the cytoplasm. Its pathway is protein modification; protein ubiquitination. Functionally, substrate-recognition component of a cullin-5-RING E3 ubiquitin-protein ligase complex (ECS complex, also named CRL5 complex), which mediates the ubiquitination and subsequent proteasomal degradation of target proteins, such as EPOR and GHR. Specifically recognizes and binds phosphorylated proteins via its SH2 domain, promoting their ubiquitination. The ECS(SOCS2) complex acts as a key regulator of growth hormone receptor (GHR) levels by mediating ubiquitination and degradation of GHR, following GHR phosphorylation by JAK2. The ECS(SOCS2) also catalyzes ubiquitination and degradation of JAK2-phosphorylated EPOR. This is Suppressor of cytokine signaling 2 (Socs2) from Rattus norvegicus (Rat).